Consider the following 173-residue polypeptide: Crossover junction endodeoxyribonuclease RuvC (173 aa).

Active-site residues include D8, E67, and D139. Mg(2+) is bound by residues D8, E67, and D139.

Belongs to the RuvC family. As to quaternary structure, homodimer which binds Holliday junction (HJ) DNA. The HJ becomes 2-fold symmetrical on binding to RuvC with unstacked arms; it has a different conformation from HJ DNA in complex with RuvA. In the full resolvosome a probable DNA-RuvA(4)-RuvB(12)-RuvC(2) complex forms which resolves the HJ. Requires Mg(2+) as cofactor.

The protein resides in the cytoplasm. It carries out the reaction Endonucleolytic cleavage at a junction such as a reciprocal single-stranded crossover between two homologous DNA duplexes (Holliday junction).. Functionally, the RuvA-RuvB-RuvC complex processes Holliday junction (HJ) DNA during genetic recombination and DNA repair. Endonuclease that resolves HJ intermediates. Cleaves cruciform DNA by making single-stranded nicks across the HJ at symmetrical positions within the homologous arms, yielding a 5'-phosphate and a 3'-hydroxyl group; requires a central core of homology in the junction. The consensus cleavage sequence is 5'-(A/T)TT(C/G)-3'. Cleavage occurs on the 3'-side of the TT dinucleotide at the point of strand exchange. HJ branch migration catalyzed by RuvA-RuvB allows RuvC to scan DNA until it finds its consensus sequence, where it cleaves and resolves the cruciform DNA. This Salmonella dublin (strain CT_02021853) protein is Crossover junction endodeoxyribonuclease RuvC.